The chain runs to 459 residues: NADP-specific glutamate dehydrogenase (459 aa).

Residue K114 is part of the active site.

Belongs to the Glu/Leu/Phe/Val dehydrogenases family. As to quaternary structure, homohexamer.

It carries out the reaction L-glutamate + NADP(+) + H2O = 2-oxoglutarate + NH4(+) + NADPH + H(+). The chain is NADP-specific glutamate dehydrogenase (gdhA) from Emericella nidulans (strain FGSC A4 / ATCC 38163 / CBS 112.46 / NRRL 194 / M139) (Aspergillus nidulans).